Reading from the N-terminus, the 411-residue chain is Acetate kinase (411 aa).

A Mg(2+)-binding site is contributed by Asn7. Lys14 contacts ATP. Arg94 contacts substrate. Asp151 functions as the Proton donor/acceptor in the catalytic mechanism. ATP contacts are provided by residues 211 to 215 (HLGNG), 285 to 287 (DMR), and 333 to 337 (GIGEN). Glu387 contacts Mg(2+).

The protein belongs to the acetokinase family. Homodimer. Requires Mg(2+) as cofactor. Mn(2+) is required as a cofactor.

Its subcellular location is the cytoplasm. It carries out the reaction acetate + ATP = acetyl phosphate + ADP. It functions in the pathway metabolic intermediate biosynthesis; acetyl-CoA biosynthesis; acetyl-CoA from acetate: step 1/2. Functionally, catalyzes the formation of acetyl phosphate from acetate and ATP. Can also catalyze the reverse reaction. The sequence is that of Acetate kinase from Syntrophobacter fumaroxidans (strain DSM 10017 / MPOB).